Here is a 210-residue protein sequence, read N- to C-terminus: UMP-CMP kinase 3 (210 aa).

Residue 34 to 39 (GSGKGT) coordinates ATP. The tract at residues 54–83 (SAGDLLRAEIKSGSENGTMIENMIKEGKIV) is NMP. A ribonucleoside 5'-phosphate contacts are provided by residues Arg-60, 81-83 (KIV), and 108-111 (GFPR). Asn-115 contributes to the CMP binding site. An LID region spans residues 146–154 (GRNQGRVDD). An ATP-binding site is contributed by Arg-147. Positions 151 and 162 each coordinate a ribonucleoside 5'-phosphate. Lys-190 contributes to the ATP binding site.

The protein belongs to the adenylate kinase family. UMP-CMP kinase subfamily. Monomer. Requires Mg(2+) as cofactor.

Its subcellular location is the cytoplasm. The protein localises to the nucleus. The catalysed reaction is UMP + ATP = UDP + ADP. The enzyme catalyses CMP + ATP = CDP + ADP. It carries out the reaction dCMP + ATP = dCDP + ADP. In terms of biological role, catalyzes the phosphorylation of pyrimidine nucleoside monophosphates at the expense of ATP. Plays an important role in de novo pyrimidine nucleotide biosynthesis. Has preference for UMP and CMP as phosphate acceptors. The protein is UMP-CMP kinase 3 (URA6) of Oryza sativa subsp. japonica (Rice).